The sequence spans 390 residues: Methionyl-tRNA formyltransferase, mitochondrial (390 aa).

A mitochondrion-targeting transit peptide spans 1–33 (MRVLLRCCCGHLPVGGGAGRRSNPRWRALARLS).

The protein belongs to the Fmt family.

Its subcellular location is the mitochondrion. It carries out the reaction L-methionyl-tRNA(fMet) + (6R)-10-formyltetrahydrofolate = N-formyl-L-methionyl-tRNA(fMet) + (6S)-5,6,7,8-tetrahydrofolate + H(+). Its function is as follows. Methionyl-tRNA formyltransferase that formylates methionyl-tRNA in mitochondria and is crucial for translation initiation. The polypeptide is Methionyl-tRNA formyltransferase, mitochondrial (MTFMT) (Bos taurus (Bovine)).